The primary structure comprises 452 residues: Flavin-containing monooxygenase FMO GS-OX-like 4 (452 aa).

17–22 contributes to the FAD binding site; that stretch reads GAGAAG. 217–222 lines the NADP(+) pocket; it reads GNSASA.

It belongs to the FMO family. FAD serves as cofactor.

Catalyzes the conversion of methylthioalkyl glucosinolates of any chain length into methylsulfinylalkyl glucosinolates. The protein is Flavin-containing monooxygenase FMO GS-OX-like 4 of Arabidopsis thaliana (Mouse-ear cress).